We begin with the raw amino-acid sequence, 493 residues long: MKISSLLFEISELVEKNVGYITQIIGPVLDVAFSPGEMPSIYNSLVVKGRNSAGQEINVTCEVQQLLGNNEVRAVAMSATDGLMRGMGAVDTGAPLSVPVGETTLGRIFNVLGEPVDNLGPVQNSATFPIHRSAPAFTQLDTKLSIFETGIKVVDLLAPYRRGGKIGLFGGAGVGKTVLIMELINNIAKAHGGVSVFGGVGERTREGNDLYMEMKESKVINEQNISESKVALVYGQMNEPPGARMRVGLTALTMAEYFRDINKRDVLLFIDNIFRFVQAGSEVSALLGRMPSAVGYQPTLGTEMGSLQERITSTKEGSITSIQAVYVPADDLTDPAPATTFAHLDATTVLSRGLAAKGIYPAVDPLDSTSTMLQPWIVGEEHYETAQGVKQTLQRYKELQDIIAILGLDELSEEDRLTVARARKIERFLSQPFFVAEVFTGSPGKYVSLPETIKGFQMILSGELDNLPEQAFYLVGNIDEAAAKAAALQAGGQ.

Residue Gly170 to Thr177 coordinates ATP.

This sequence belongs to the ATPase alpha/beta chains family. In terms of assembly, F-type ATPases have 2 components, CF(1) - the catalytic core - and CF(0) - the membrane proton channel. CF(1) has five subunits: alpha(3), beta(3), gamma(1), delta(1), epsilon(1). CF(0) has four main subunits: a(1), b(1), b'(1) and c(9-12).

It localises to the plastid. The protein localises to the chloroplast thylakoid membrane. It carries out the reaction ATP + H2O + 4 H(+)(in) = ADP + phosphate + 5 H(+)(out). Functionally, produces ATP from ADP in the presence of a proton gradient across the membrane. The catalytic sites are hosted primarily by the beta subunits. In Adiantum capillus-veneris (Maidenhair fern), this protein is ATP synthase subunit beta, chloroplastic.